Reading from the N-terminus, the 105-residue chain is ATP-dependent Clp protease adapter protein ClpS (105 aa).

The protein belongs to the ClpS family. As to quaternary structure, binds to the N-terminal domain of the chaperone ClpA.

In terms of biological role, involved in the modulation of the specificity of the ClpAP-mediated ATP-dependent protein degradation. The protein is ATP-dependent Clp protease adapter protein ClpS of Prochlorococcus marinus (strain MIT 9515).